The chain runs to 124 residues: Ribonuclease pancreatic (124 aa).

The tract at residues 1 to 23 (RESPAMKFQRQHMDSGNSPGNNP) is disordered. The substrate site is built by K7 and R10. H12 (proton acceptor) is an active-site residue. Positions 14 to 23 (DSGNSPGNNP) are enriched in polar residues. Disulfide bonds link C26/C84, C40/C95, C58/C110, and C65/C72. Residues 41–45 (KPVNT) and K66 contribute to the substrate site. N76 is a glycosylation site (N-linked (GlcNAc...) asparagine; partial). R85 is a binding site for substrate. H119 acts as the Proton donor in catalysis.

This sequence belongs to the pancreatic ribonuclease family. As to quaternary structure, monomer. Interacts with and forms tight 1:1 complexes with RNH1. Dimerization of two such complexes may occur. Interaction with RNH1 inhibits this protein. Pancreas.

The protein localises to the secreted. It carries out the reaction an [RNA] containing cytidine + H2O = an [RNA]-3'-cytidine-3'-phosphate + a 5'-hydroxy-ribonucleotide-3'-[RNA].. It catalyses the reaction an [RNA] containing uridine + H2O = an [RNA]-3'-uridine-3'-phosphate + a 5'-hydroxy-ribonucleotide-3'-[RNA].. Endonuclease that catalyzes the cleavage of RNA on the 3' side of pyrimidine nucleotides. Acts on single-stranded and double-stranded RNA. This is Ribonuclease pancreatic (RNASE1) from Balaenoptera acutorostrata (Common minke whale).